Consider the following 167-residue polypeptide: Ubiquitin-fold modifier-conjugating enzyme 1 (167 aa).

The active-site Glycyl thioester intermediate is the Cys116.

The protein belongs to the ubiquitin-conjugating enzyme family. UFC1 subfamily. In terms of assembly, interacts with UBA5 (via C-terminus). Interacts with UFL1. Interacts with UFM1.

Functionally, E2-like enzyme which specifically catalyzes the second step in ufmylation. Accepts the ubiquitin-like modifier UFM1 from the E1 enzyme UBA5 and forms an intermediate with UFM1 via a thioester linkage. Ufmylation is involved in various processes, such as ribosome recycling, response to DNA damage, interferon response or reticulophagy (also called ER-phagy). The chain is Ubiquitin-fold modifier-conjugating enzyme 1 from Esox lucius (Northern pike).